The primary structure comprises 246 residues: E3 ubiquitin-protein ligase MARCHF2 (246 aa).

The RING-CH-type zinc-finger motif lies at Gly-56–Glu-116. Zn(2+) is bound by residues Cys-64, Cys-67, Cys-80, Cys-82, His-90, Cys-93, Cys-106, and Cys-109. 2 consecutive transmembrane segments (helical) span residues Leu-138–Leu-158 and Ala-175–Val-195.

The protein resides in the endoplasmic reticulum membrane. It localises to the lysosome membrane. Its subcellular location is the endosome membrane. It catalyses the reaction S-ubiquitinyl-[E2 ubiquitin-conjugating enzyme]-L-cysteine + [acceptor protein]-L-lysine = [E2 ubiquitin-conjugating enzyme]-L-cysteine + N(6)-ubiquitinyl-[acceptor protein]-L-lysine.. Its pathway is protein modification; protein ubiquitination. Functionally, E3 ubiquitin-protein ligase which may be involved in endosomal trafficking. E3 ubiquitin ligases accept ubiquitin from an E2 ubiquitin-conjugating enzyme in the form of a thioester and then directly transfer the ubiquitin to targeted substrates. The polypeptide is E3 ubiquitin-protein ligase MARCHF2 (marchf2) (Xenopus laevis (African clawed frog)).